A 505-amino-acid chain; its full sequence is Phosphoethanolamine N-methyltransferase (505 aa).

Positions 76, 81, 97, 122, 123, and 141 each coordinate S-adenosyl-L-homocysteine. The phosphocholine site is built by Ser174, Ser179, Gly180, Arg184, and Tyr191. Residues 260-261 and Tyr269 each bind N-methylethanolamine phosphate; that span reads QY. Tyr269 contributes to the phosphocholine binding site. S-adenosyl-L-homocysteine contacts are provided by Val278, Ser279, Gly305, Asp327, Asp353, Cys354, and Arg370. 5 residues coordinate phosphocholine: Tyr401, Tyr415, Arg419, Tyr421, and Lys487. N-methylethanolamine phosphate contacts are provided by residues Tyr401, Tyr415, 419–421, and Lys487; that span reads RGY.

Belongs to the class I-like SAM-binding methyltransferase superfamily. PEAMT family.

It catalyses the reaction phosphoethanolamine + S-adenosyl-L-methionine = N-methylethanolamine phosphate + S-adenosyl-L-homocysteine + H(+). It carries out the reaction N-methylethanolamine phosphate + S-adenosyl-L-methionine = N,N-dimethylethanolamine phosphate + S-adenosyl-L-homocysteine + H(+). The catalysed reaction is N,N-dimethylethanolamine phosphate + S-adenosyl-L-methionine = phosphocholine + S-adenosyl-L-homocysteine + H(+). The protein operates within phospholipid metabolism; phosphatidylcholine biosynthesis; phosphocholine from phosphoethanolamine: step 1/1. Its activity is regulated as follows. Inhibited by phosphatidic acid. Functionally, involved in phosphocholine biosynthesis. Catalyzes the N-methylation of phosphoethanolamine, phosphomonomethylethanolamine and phosphodimethylethanolamine, the three methylation steps required to convert phosphoethanolamine to phosphocholine (PC). The protein is Phosphoethanolamine N-methyltransferase of Triticum aestivum (Wheat).